The following is a 159-amino-acid chain: Ribosomal RNA large subunit methyltransferase H (159 aa).

Residues Leu-76, Gly-108, and 127–132 contribute to the S-adenosyl-L-methionine site; that span reads FSKMTF.

Belongs to the RNA methyltransferase RlmH family. In terms of assembly, homodimer.

It is found in the cytoplasm. The catalysed reaction is pseudouridine(1915) in 23S rRNA + S-adenosyl-L-methionine = N(3)-methylpseudouridine(1915) in 23S rRNA + S-adenosyl-L-homocysteine + H(+). Functionally, specifically methylates the pseudouridine at position 1915 (m3Psi1915) in 23S rRNA. The chain is Ribosomal RNA large subunit methyltransferase H from Exiguobacterium sibiricum (strain DSM 17290 / CCUG 55495 / CIP 109462 / JCM 13490 / 255-15).